A 130-amino-acid polypeptide reads, in one-letter code: Protein YoeA (130 aa).

Residues 1–28 (MLYNIPCRIYILSTLSLCISGIVSTATA) form the signal peptide. The TBDR plug domain occupies 51-130 (NLWESPATIQ…RCRRYSRGER (80 aa)).

The protein belongs to the TonB-dependent receptor family.

The polypeptide is Protein YoeA (yoeA) (Escherichia coli (strain K12)).